A 378-amino-acid chain; its full sequence is Transmembrane 6 superfamily member 2 (378 aa).

A run of 10 helical transmembrane segments spans residues 10–30 (TVAM…VSAF), 34–54 (LFVV…VYSL), 63–83 (PLYA…VIAL), 110–130 (IFIC…MAGA), 140–160 (LGLY…PGNI), 170–190 (PTFF…VRIF), 219–239 (LALI…GLVV), 269–289 (MLMY…ALAF), 291–311 (GCSW…QAQF), and 332–352 (TWAT…LLAF). EXPERA domains are found at residues 61–186 (YDPL…CWAG) and 217–351 (ADLA…HLLA).

This sequence belongs to the TM6SF family. Highly expressed in the liver at both the mRNA and protein levels.

The protein localises to the endoplasmic reticulum membrane. It localises to the endoplasmic reticulum-Golgi intermediate compartment membrane. Functionally, regulator of liver fat metabolism influencing triglyceride secretion and hepatic lipid droplet content. May function as sterol isomerase. This Mus musculus (Mouse) protein is Transmembrane 6 superfamily member 2 (Tm6sf2).